Reading from the N-terminus, the 621-residue chain is 1-deoxy-D-xylulose-5-phosphate synthase (621 aa).

Residues H80 and 121-123 (GHS) each bind thiamine diphosphate. D152 is a binding site for Mg(2+). Residues 153 to 154 (GA), N181, Y288, and E370 each bind thiamine diphosphate. N181 provides a ligand contact to Mg(2+).

Belongs to the transketolase family. DXPS subfamily. In terms of assembly, homodimer. It depends on Mg(2+) as a cofactor. Thiamine diphosphate serves as cofactor.

It catalyses the reaction D-glyceraldehyde 3-phosphate + pyruvate + H(+) = 1-deoxy-D-xylulose 5-phosphate + CO2. Its pathway is metabolic intermediate biosynthesis; 1-deoxy-D-xylulose 5-phosphate biosynthesis; 1-deoxy-D-xylulose 5-phosphate from D-glyceraldehyde 3-phosphate and pyruvate: step 1/1. Functionally, catalyzes the acyloin condensation reaction between C atoms 2 and 3 of pyruvate and glyceraldehyde 3-phosphate to yield 1-deoxy-D-xylulose-5-phosphate (DXP). The sequence is that of 1-deoxy-D-xylulose-5-phosphate synthase from Vibrio campbellii (strain ATCC BAA-1116).